We begin with the raw amino-acid sequence, 81 residues long: Large ribosomal subunit protein bL31B (81 aa).

This sequence belongs to the bacterial ribosomal protein bL31 family. Type B subfamily. As to quaternary structure, part of the 50S ribosomal subunit.

This Halalkalibacterium halodurans (strain ATCC BAA-125 / DSM 18197 / FERM 7344 / JCM 9153 / C-125) (Bacillus halodurans) protein is Large ribosomal subunit protein bL31B.